The primary structure comprises 382 residues: Ribosomal RNA large subunit methyltransferase F (382 aa).

2 disordered regions span residues 1–53 and 269–288; these read MTKP…LHRD and NRAS…KSQL. Residues 8–24 are compositionally biased toward basic residues; it reads ASRKPVTKSGRNSKRSR. The segment covering 269–286 has biased composition (basic and acidic residues); it reads NRASKGHKLEPKAPKDKS.

Belongs to the methyltransferase superfamily. METTL16/RlmF family.

It localises to the cytoplasm. The enzyme catalyses adenosine(1618) in 23S rRNA + S-adenosyl-L-methionine = N(6)-methyladenosine(1618) in 23S rRNA + S-adenosyl-L-homocysteine + H(+). In terms of biological role, specifically methylates the adenine in position 1618 of 23S rRNA. This chain is Ribosomal RNA large subunit methyltransferase F, found in Shewanella woodyi (strain ATCC 51908 / MS32).